A 182-amino-acid chain; its full sequence is Peptidyl-tRNA hydrolase (182 aa).

Tyrosine 14 contacts tRNA. Residue histidine 19 is the Proton acceptor of the active site. TRNA contacts are provided by phenylalanine 60, asparagine 62, and asparagine 106.

Belongs to the PTH family. As to quaternary structure, monomer.

The protein localises to the cytoplasm. The enzyme catalyses an N-acyl-L-alpha-aminoacyl-tRNA + H2O = an N-acyl-L-amino acid + a tRNA + H(+). Its function is as follows. Hydrolyzes ribosome-free peptidyl-tRNAs (with 1 or more amino acids incorporated), which drop off the ribosome during protein synthesis, or as a result of ribosome stalling. Functionally, catalyzes the release of premature peptidyl moieties from peptidyl-tRNA molecules trapped in stalled 50S ribosomal subunits, and thus maintains levels of free tRNAs and 50S ribosomes. This Campylobacter concisus (strain 13826) protein is Peptidyl-tRNA hydrolase.